Here is a 452-residue protein sequence, read N- to C-terminus: tRNA modification GTPase MnmE (452 aa).

Residues Arg-21, Glu-82, and Arg-121 each contribute to the (6S)-5-formyl-5,6,7,8-tetrahydrofolate site. One can recognise a TrmE-type G domain in the interval 214-372; it reads GARVVLVGRP…LAKTIATTLL (159 aa). Asn-224 provides a ligand contact to K(+). GTP contacts are provided by residues 224–229, 243–249, 268–271, and 353–355; these read NVGKSS, TPIPGTT, DTAG, and SAR. Ser-228 is a Mg(2+) binding site. Thr-243, Ile-245, and Thr-248 together coordinate K(+). Position 249 (Thr-249) interacts with Mg(2+). Lys-452 serves as a coordination point for (6S)-5-formyl-5,6,7,8-tetrahydrofolate.

This sequence belongs to the TRAFAC class TrmE-Era-EngA-EngB-Septin-like GTPase superfamily. TrmE GTPase family. As to quaternary structure, homodimer. Heterotetramer of two MnmE and two MnmG subunits. K(+) is required as a cofactor.

The protein localises to the cytoplasm. In terms of biological role, exhibits a very high intrinsic GTPase hydrolysis rate. Involved in the addition of a carboxymethylaminomethyl (cmnm) group at the wobble position (U34) of certain tRNAs, forming tRNA-cmnm(5)s(2)U34. The chain is tRNA modification GTPase MnmE from Chloroflexus aurantiacus (strain ATCC 29366 / DSM 635 / J-10-fl).